A 178-amino-acid chain; its full sequence is Prion-like protein doppel (178 aa).

An N-terminal signal peptide occupies residues methionine 1–lysine 25. The segment at arginine 27–arginine 50 is flexible tail. Residues threonine 51–glycine 154 form a globular region. 2 disulfides stabilise this stretch: cysteine 94-cysteine 147 and cysteine 108-cysteine 142. N-linked (GlcNAc...) asparagine glycans are attached at residues asparagine 98 and asparagine 110. Residues lysine 124 to leucine 141 are cu(2+) binding. Residue glycine 154 is the site of GPI-anchor amidated glycine attachment. The propeptide at alanine 155–lysine 178 is removed in mature form.

Belongs to the prion family. In terms of processing, N-glycosylated. Post-translationally, O-glycosylated. Strongly expressed in testis. Detected at low levels in ovary, spleen, kidney and mammary gland.

The protein localises to the cell membrane. Its function is as follows. Required for normal acrosome reaction and for normal male fertility. Can bind Cu(2+). The protein is Prion-like protein doppel (PRND) of Bos taurus (Bovine).